Consider the following 578-residue polypeptide: MKASRFFIGTLKEAPADAEIVSHKLMVRAGMIRRVAGGIYNYLPVGLRSIRKVEAIVREEMNRAGAIELLMPAVQPAELWQESGRWEQYGPELLRFKDRKDNDFVIGPTHEEVVTDIARNQIKSYRQMPVNFYQIQTKFRDEIRPRFGVMRGREFIMKDAYSFDKDAAGLNESYRKMYDAYVRIFTRLGLEFRAVAADSGSIGGNFSHEFHVIADTGEDAIAYCPTSEFAANVEAAEALPLIAERAAPAEAMEKVATPGKAKCEAVAELLSIPLERTIKSIVLATDNEGAEPTIWLVMLRGDHDLNEIKASKLPGLKNHRFATEQEIVEWFGTPPGYLGPVGTKKPVKVIADRTVANMSDFVVGANEVDYHIAGVNWGRDLPEPEVADVRNVKKGDPSPDGKGVIDICRGIEVGHVFQLGTKYSEAMGATFLDESGKPQPMLMGCYGVGITRILGAAIEQNFDDKGIIWPESIAPFEVVLCPMGYDRSDMVRETADKLYAELVAAGIDVILDDRGERPGVMFADWELIGVPHRLVIGERGLKEGKIEYQGRRDAEATLLPADTAAAAVAEKIRAALAH.

The protein belongs to the class-II aminoacyl-tRNA synthetase family. ProS type 1 subfamily. In terms of assembly, homodimer.

The protein resides in the cytoplasm. The enzyme catalyses tRNA(Pro) + L-proline + ATP = L-prolyl-tRNA(Pro) + AMP + diphosphate. Catalyzes the attachment of proline to tRNA(Pro) in a two-step reaction: proline is first activated by ATP to form Pro-AMP and then transferred to the acceptor end of tRNA(Pro). As ProRS can inadvertently accommodate and process non-cognate amino acids such as alanine and cysteine, to avoid such errors it has two additional distinct editing activities against alanine. One activity is designated as 'pretransfer' editing and involves the tRNA(Pro)-independent hydrolysis of activated Ala-AMP. The other activity is designated 'posttransfer' editing and involves deacylation of mischarged Ala-tRNA(Pro). The misacylated Cys-tRNA(Pro) is not edited by ProRS. The sequence is that of Proline--tRNA ligase from Burkholderia orbicola (strain AU 1054).